The chain runs to 367 residues: Protein RecA (367 aa).

73–80 (GPESSGKT) contacts ATP.

The protein belongs to the RecA family.

The protein localises to the cytoplasm. Functionally, can catalyze the hydrolysis of ATP in the presence of single-stranded DNA, the ATP-dependent uptake of single-stranded DNA by duplex DNA, and the ATP-dependent hybridization of homologous single-stranded DNAs. It interacts with LexA causing its activation and leading to its autocatalytic cleavage. The polypeptide is Protein RecA (Delftia acidovorans (strain DSM 14801 / SPH-1)).